Reading from the N-terminus, the 218-residue chain is Testis expressed protein 56 (218 aa).

This Rattus norvegicus (Rat) protein is Testis expressed protein 56 (Tex56).